The chain runs to 429 residues: MAGSGAWKRLKSMLRKDDAPLFLNDTSAFDFSDEAGDEGLSRFNKLRVVVADDGSEAPERPVNGAHPTLQADDDSLLDQDLPLTNSQLSLKVDSCDNCSKQREILKQRKVKARLTIAAVLYLLFMIGELVGGYIANSLAIMTDALHMLTDLSAIILTLLALWLSSKSPTKRFTFGFHRLEVLSAMISVLLVYILMGFLLYEAVQRTIHMNYEINGDIMLITAAVGVAVNVIMGFLLNQSGHRHSHSHSLPSNSPTRGSGCERNHGQDSLAVRAAFVHALGDLVQSVGVLIAAYIIRFKPEYKIADPICTYVFSLLVAFTTFRIIWDTVVIILEGVPSHLNVDYIKEALMKIEDVYSVEDLNIWSLTSGKSTAIVHIQLIPGSSSKWEEVQSKANHLLLNTFGMYRCTIQLQSYRQEVDRTCANCQSSSP.

Over M1–R113 the chain is Cytoplasmic. A helical transmembrane segment spans residues L114 to I134. At A135 to D143 the chain is on the lumenal side. Residues A144–S164 traverse the membrane as a helical segment. Zn(2+) is bound by residues H146 and D150. Topologically, residues S165–R178 are cytoplasmic. A helical membrane pass occupies residues L179–L199. The Lumenal segment spans residues Y200–D216. A helical transmembrane segment spans residues I217–N237. The Cytoplasmic portion of the chain corresponds to Q238–A274. Residues G240–H264 form a zinc binding region. Residues F275–I295 form a helical membrane-spanning segment. The Zn(2+) site is built by H277 and D281. The Lumenal segment spans residues R296–Y310. Residues V311 to I331 traverse the membrane as a helical segment. Over L332–P429 the chain is Cytoplasmic.

The protein belongs to the cation diffusion facilitator (CDF) transporter (TC 2.A.4) family. SLC30A subfamily. In terms of assembly, homodimer; dityrosine-linked. Homodimerization could be specific of the human protein and enhances the zinc transport efficiency. Interacts with TMEM163. In terms of processing, homodimerization through dityrosine bonds is stimulated by oxidative stress.

It localises to the endosome membrane. The protein localises to the late endosome membrane. Its subcellular location is the lysosome membrane. It carries out the reaction Zn(2+)(in) + 2 H(+)(out) = Zn(2+)(out) + 2 H(+)(in). Its function is as follows. Probable proton-coupled zinc ion antiporter mediating zinc import from cytoplasm potentially into the endocytic compartment. Controls zinc deposition in milk. The protein is Probable proton-coupled zinc antiporter SLC30A4 of Homo sapiens (Human).